Consider the following 524-residue polypeptide: Cytokinin dehydrogenase 4 (524 aa).

The N-terminal stretch at 1 to 26 is a signal peptide; sequence MTNTLCLSLITLITLFISLTPTLIKS. 2 N-linked (GlcNAc...) asparagine glycosylation sites follow: Asn-39 and Asn-58. The FAD-binding PCMH-type domain maps to 60–249; sequence TDENPGAVLC…TRARIALDHA (190 aa). Ala-104, Gly-106, and Gly-108 together coordinate FAD. His-109 is modified (pros-8alpha-FAD histidine). Positions 110 and 114 each coordinate FAD. Asn-124 carries N-linked (GlcNAc...) asparagine glycosylation. FAD contacts are provided by Asp-173, Ser-178, Ser-184, Ile-188, and Ile-239. N-linked (GlcNAc...) asparagine glycosylation occurs at Asn-411. The FAD site is built by Tyr-482, Ser-517, and Gln-520.

It belongs to the oxygen-dependent FAD-linked oxidoreductase family. Requires FAD as cofactor. As to expression, expressed in trichomes and in developing stomata of young growing leaves. Strong expression in stipules and in the root cap, but not detected in the root meristem.

It localises to the secreted. The protein localises to the extracellular space. It catalyses the reaction N(6)-dimethylallyladenine + A + H2O = 3-methyl-2-butenal + adenine + AH2. Catalyzes the oxidation of cytokinins, a family of N(6)-substituted adenine derivatives that are plant hormones, where the substituent is an isopentenyl group. This chain is Cytokinin dehydrogenase 4 (CKX4), found in Arabidopsis thaliana (Mouse-ear cress).